The primary structure comprises 785 residues: MTKKLTIKRKVKEPEPQNEAPDSHESSDNEEEEEDLLQAVKDPGEDSTDDEGIDQEYQTDSSEDLEFESDEEGNYLGRKGAEGSSGDDDEESAEDEEEEDDADAKKSSKNNDEEAATTSKSIKKSQEKPTSSNKVVPVVPARDPSKVEYADSDTSDEEDIRNTVGNIPMHWYDEYKHIGYDWDAKKIVKPPKGDQIDDFLRKIEDPNFWRTVKDPLTGQEVLLTDADIALIKRINSGRIPNEEHDEYAPWIEWFTSEVEKMPIKNVPDHKRSFLPSGSEKKTVSRMVHALKMGWMKTTEEVQREKQEKRGPKFYMLWETDTSREQMRRIHDPVSAPKRDLPGHAESYNPPPEYLFDEKEAKEWHKLKDEPHRRKLHFMPQKFKSLREVPAYSRYLRERFLRCLDLYLCPRAKRVKLNIDAEYLIPKLPSPRDLQPFPTVESLVYRGHTDLVRSVSVEPKGEYLVSGSDDKTVKIWEIATGRCIRTIETEDVVRCVAWCPNAKLSIIAVATGSRLLLVNPKVGDKLLVKKTDDLLAEAPVLDVIENERIKTAVQWANAEPADQEKGVRVIITHFKPIRQVTWHGRGDYLATVMPEGANRSALIHQLSKRRSQIPFSKSKGLIQCVLFHPVKPCFFVATQHNIRIYDLVKQELIKKLLTNSKWISGMSIHPKGDNLLVSTYDKKMLWFDLDLSTKPYQTMRLHRNAVRSVAFHLRYPLFASGSDDQAVIVSHGMVYNDLLQNPLIVPLKKLQTHEKREEFGVLDVNWHPVQPWVFSTGADCTIRLFT.

Basic residues predominate over residues 1 to 11; sequence MTKKLTIKRKV. The segment at 1-160 is disordered; that stretch reads MTKKLTIKRK…DSDTSDEEDI (160 aa). 3 stretches are compositionally biased toward acidic residues: residues 45-54, 61-73, and 85-102; these read EDSTDDEGID, SSED…DEEG, and SGDD…EDDA. A compositionally biased stretch (basic and acidic residues) spans 103 to 112; that stretch reads DAKKSSKNND. A compositionally biased stretch (acidic residues) spans 150 to 159; that stretch reads ADSDTSDEED. 7 WD repeats span residues 446 to 487, 489 to 527, 571 to 613, 616 to 654, 657 to 696, 700 to 739, and 755 to 785; these read GHTD…RTIE, EDVV…KLLV, THFK…SQIP, KSKG…LIKK, TNSK…KPYQ, LHRN…DLLQ, and REEF…RLFT.

It belongs to the WD repeat BOP1/ERB1 family.

Its subcellular location is the nucleus. It localises to the nucleolus. It is found in the nucleoplasm. Required for maturation of ribosomal RNAs and formation of the large ribosomal subunit. The protein is Ribosome biogenesis protein BOP1 homolog of Drosophila persimilis (Fruit fly).